A 205-amino-acid polypeptide reads, in one-letter code: ATP-dependent Clp protease proteolytic subunit (205 aa).

Residue serine 101 is the Nucleophile of the active site. The active site involves histidine 126.

This sequence belongs to the peptidase S14 family. In terms of assembly, component of the chloroplastic Clp protease core complex.

It is found in the plastid. The protein localises to the chloroplast stroma. It catalyses the reaction Hydrolysis of proteins to small peptides in the presence of ATP and magnesium. alpha-casein is the usual test substrate. In the absence of ATP, only oligopeptides shorter than five residues are hydrolyzed (such as succinyl-Leu-Tyr-|-NHMec, and Leu-Tyr-Leu-|-Tyr-Trp, in which cleavage of the -Tyr-|-Leu- and -Tyr-|-Trp bonds also occurs).. Functionally, cleaves peptides in various proteins in a process that requires ATP hydrolysis. Has a chymotrypsin-like activity. Plays a major role in the degradation of misfolded proteins. The sequence is that of ATP-dependent Clp protease proteolytic subunit from Pinus contorta (Shore pine).